The following is a 310-amino-acid chain: TLC domain-containing protein 2 (310 aa).

The next 6 membrane-spanning stretches (helical) occupy residues 6 to 26 (LLVA…LQLL), 40 to 60 (NIFV…VGLW), 79 to 99 (VLVA…LWNQ), 117 to 137 (CLST…SLLL), 167 to 187 (ASLA…SLWL), and 194 to 214 (LSLA…SISI). One can recognise a TLC domain in the interval 33-227 (RDRWMWRNIF…IRILTKDILQ (195 aa)).

The protein belongs to the TLCD family.

The protein resides in the cell membrane. In terms of biological role, regulates the composition and fluidity of the plasma membrane. Inhibits the incorporation of membrane-fluidizing phospholipids containing omega-3 long-chain polyunsaturated fatty acids (LCPUFA) and thereby promotes membrane rigidity. Does not appear to have any effect on LCPUFA synthesis. This chain is TLC domain-containing protein 2 (Tlcd2), found in Mus musculus (Mouse).